The primary structure comprises 144 residues: Large ribosomal subunit protein uL15 (144 aa).

The segment at 1 to 58 is disordered; that stretch reads MRLNTLAPAAGSKHAPKRVGRGIGSGLGKTGGRGHKGQKSRSGGKVRPGFEGGQMPLK. Residues 21–31 show a composition bias toward gly residues; that stretch reads RGIGSGLGKTG. The span at 32–44 shows a compositional bias: basic residues; sequence GRGHKGQKSRSGG.

It belongs to the universal ribosomal protein uL15 family. In terms of assembly, part of the 50S ribosomal subunit.

In terms of biological role, binds to the 23S rRNA. The polypeptide is Large ribosomal subunit protein uL15 (Vibrio parahaemolyticus serotype O3:K6 (strain RIMD 2210633)).